The chain runs to 111 residues: Large ribosomal subunit protein uL24 (111 aa).

Belongs to the universal ribosomal protein uL24 family. Part of the 50S ribosomal subunit.

Its function is as follows. One of two assembly initiator proteins, it binds directly to the 5'-end of the 23S rRNA, where it nucleates assembly of the 50S subunit. In terms of biological role, one of the proteins that surrounds the polypeptide exit tunnel on the outside of the subunit. This chain is Large ribosomal subunit protein uL24, found in Chlamydia pneumoniae (Chlamydophila pneumoniae).